We begin with the raw amino-acid sequence, 195 residues long: MQRNTYNKVGLYILSLAMLFVFIIILTAKIPFCFTSDCSFIGLKKLVLTNIVPIVCFVFFLFSIYFYNRLKNITKYNGQDSVKITSCQSESYESLTFLATYIVPFMGFSFEDMQKNIAYLLLVVVIGIIFIKTDKYYANPTLALFGFKLYRVNILHPGSGETKNLIAISNDVLKVDDNVYYSFFDEFVFIARKKI.

The next 3 helical transmembrane spans lie at 10–30, 46–66, and 117–137; these read GLYI…TAKI, LVLT…SIYF, and IAYL…DKYY.

It is found in the cell inner membrane. Its function is as follows. Component of antiviral defense system Kiwa, composed of KwaA and KwaB. Expression of Kiwa in E.coli (strain MG1655) confers resistance to phages lambda and SECphi18. The polypeptide is Kiwa protein KwaA (Escherichia coli O55:H7 (strain RM12579 / EPEC)).